The sequence spans 914 residues: Beta-mannosidase A (914 aa).

A signal peptide spans 1–20 (MRFTATAAALVASSIPATLG). Residues Asn-39, Asn-79, Asn-230, Asn-265, Asn-299, Asn-309, and Asn-330 are each glycosylated (N-linked (GlcNAc...) asparagine). The Proton donor role is filled by Glu-462. 8 N-linked (GlcNAc...) asparagine glycosylation sites follow: Asn-591, Asn-614, Asn-641, Asn-721, Asn-744, Asn-773, Asn-784, and Asn-909.

Belongs to the glycosyl hydrolase 2 family. Beta-mannosidase A subfamily. In terms of assembly, homodimer.

Its subcellular location is the secreted. The enzyme catalyses Hydrolysis of terminal, non-reducing beta-D-mannose residues in beta-D-mannosides.. It functions in the pathway glycan metabolism; N-glycan degradation. Its function is as follows. Exoglycosidase that cleaves the single beta-linked mannose residue from the non-reducing end of beta-mannosidic oligosaccharides of various complexity and length. Involved in the degradation of polymeric mannan and galactomannan. The protein is Beta-mannosidase A (mndA) of Aspergillus oryzae (strain ATCC 42149 / RIB 40) (Yellow koji mold).